The following is a 219-amino-acid chain: Ras-related protein Rab-3B (219 aa).

A2 is subject to N-acetylalanine. Positions 31, 32, 33, 34, 35, 36, 37, 49, and 53 each coordinate GTP. T36 contacts Mg(2+). The Switch 1 signature appears at 45-58 (DTFTPAFVSTVGID). The Mg(2+) site is built by T54 and D77. Residues 78–96 (TAGQERYRTITTAYYRGAM) carry the Switch 2 motif. G80 serves as a coordination point for GTP. Position 86 is a phosphothreonine (T86). GTP is bound by residues N135, K136, D138, A166, and K167. Phosphoserine occurs at positions 188 and 190. S-geranylgeranyl cysteine attachment occurs at residues C217 and C219. C219 carries the cysteine methyl ester modification.

The protein belongs to the small GTPase superfamily. Rab family. In terms of assembly, interacts with RPH3A and RPH3AL. Interacts with RIMS1. Interacts with RIMS2. The GTP-bound form interacts with GAS8/DRC4 (via coiled-coil domains). Interacts with GDI2, and CHM; phosphorylation at Thr-86 disrupts these interactions. Interacts with MADD (via uDENN domain); the GTP-bound form is preferred for interaction. Requires Mg(2+) as cofactor. In terms of processing, phosphorylation of Thr-86 in the switch II region by LRRK2 prevents the association of RAB regulatory proteins, including CHM and RAB GDP dissociation inhibitor GDI2.

It localises to the cell membrane. The protein resides in the golgi apparatus. It catalyses the reaction GTP + H2O = GDP + phosphate + H(+). Its activity is regulated as follows. Regulated by guanine nucleotide exchange factors (GEFs) which promote the exchange of bound GDP for free GTP. Regulated by GTPase activating proteins (GAPs) which increase the GTP hydrolysis activity. Inhibited by GDP dissociation inhibitors (GDIs) which prevent Rab-GDP dissociation. Functionally, the small GTPases Rab are key regulators of intracellular membrane trafficking, from the formation of transport vesicles to their fusion with membranes. Rabs cycle between an inactive GDP-bound form and an active GTP-bound form that is able to recruit to membranes different sets of downstream effectors directly responsible for vesicle formation, movement, tethering and fusion. The polypeptide is Ras-related protein Rab-3B (Rattus norvegicus (Rat)).